Consider the following 273-residue polypeptide: Imidazole glycerol phosphate synthase subunit HisF (273 aa).

Residues D11 and D134 contribute to the active site.

The protein belongs to the HisA/HisF family. As to quaternary structure, heterodimer of HisH and HisF.

Its subcellular location is the cytoplasm. The catalysed reaction is 5-[(5-phospho-1-deoxy-D-ribulos-1-ylimino)methylamino]-1-(5-phospho-beta-D-ribosyl)imidazole-4-carboxamide + L-glutamine = D-erythro-1-(imidazol-4-yl)glycerol 3-phosphate + 5-amino-1-(5-phospho-beta-D-ribosyl)imidazole-4-carboxamide + L-glutamate + H(+). Its pathway is amino-acid biosynthesis; L-histidine biosynthesis; L-histidine from 5-phospho-alpha-D-ribose 1-diphosphate: step 5/9. Its function is as follows. IGPS catalyzes the conversion of PRFAR and glutamine to IGP, AICAR and glutamate. The HisF subunit catalyzes the cyclization activity that produces IGP and AICAR from PRFAR using the ammonia provided by the HisH subunit. This is Imidazole glycerol phosphate synthase subunit HisF from Methanosarcina acetivorans (strain ATCC 35395 / DSM 2834 / JCM 12185 / C2A).